The sequence spans 625 residues: MGKRKFKAESQKLLDMVINSIYSQREVFLRELISNASDAIDKIYYKALTDDSLSFDVDNYYIKITPNKEERTLTVVDTGIGMTKEELENNLGVIAKSGSHTFKSENEIKDGHDIIGQFGVGFYAAFMVADKVEVVTKSIDSDAAFKWESKGSDGYSITEADKQDIGTTITLYIKENQEEENYDEFLDTFTLQQIIKKYSDFIRYPIKMDVTESKLKEGSEDEYEDVVEEQTINTMVPIWKKNKSELTDDDYTNFYQEKRYGFDKPLKHVHINVDGSIRYNAILFIPESAPFNYYTRDYEKGLELYSNGVLIMDKCADLLPDYFSFVKGMVDSEDLSLNISREMLQHDRQLKLIAKNIKKKVKQQLVSLLRDERENYEKFFDAFGQQIKFGVYSDYGQNKDELKDLLLFYSSKEKKLVTLEEYVSCMPEDQKYIYYATGDSRDRIEKLPQTELVADKGYEILYFTDEIDEFAIKMLMNYDEKEFRSVSSGDLGIEEDEKEENEQENNDNAELFTAMKEVLSTKVKDVRASKRLKSHPVVLTADGEISLEMEKIINAMPDDQQIQADKVLEINVNHDIFQSLKAAQGNDDEKFKLYTNLLYNQALLIEGLPINDPVEFTNDICKVMV.

An a; substrate-binding region spans residues 1-341 (MGKRKFKAES…SEDLSLNISR (341 aa)). Residues 342–551 (EMLQHDRQLK…DGEISLEMEK (210 aa)) form a b region. Positions 552–625 (IINAMPDDQQ…FTNDICKVMV (74 aa)) are c.

Belongs to the heat shock protein 90 family. In terms of assembly, homodimer.

The protein resides in the cytoplasm. Functionally, molecular chaperone. Has ATPase activity. The protein is Chaperone protein HtpG of Oceanobacillus iheyensis (strain DSM 14371 / CIP 107618 / JCM 11309 / KCTC 3954 / HTE831).